The following is a 1299-amino-acid chain: DNA-directed RNA polymerase subunit beta' (1299 aa).

Zn(2+) is bound by residues C60, C62, C75, and C78. Mg(2+) is bound by residues D535, D537, and D539. Positions 877, 954, 961, and 964 each coordinate Zn(2+).

Belongs to the RNA polymerase beta' chain family. As to quaternary structure, the RNAP catalytic core consists of 2 alpha, 1 beta, 1 beta' and 1 omega subunit. When a sigma factor is associated with the core the holoenzyme is formed, which can initiate transcription. The cofactor is Mg(2+). Zn(2+) is required as a cofactor.

It carries out the reaction RNA(n) + a ribonucleoside 5'-triphosphate = RNA(n+1) + diphosphate. Its function is as follows. DNA-dependent RNA polymerase catalyzes the transcription of DNA into RNA using the four ribonucleoside triphosphates as substrates. This is DNA-directed RNA polymerase subunit beta' from Paenarthrobacter aurescens (strain TC1).